The following is a 283-amino-acid chain: Pantothenate synthetase (283 aa).

26–33 (MGNLHEGH) provides a ligand contact to ATP. His-33 (proton donor) is an active-site residue. Gln-57 lines the (R)-pantoate pocket. Residue Gln-57 participates in beta-alanine binding. 144-147 (GKKD) serves as a coordination point for ATP. A (R)-pantoate-binding site is contributed by Gln-150. ATP-binding positions include Val-173 and 181-184 (LSSR).

This sequence belongs to the pantothenate synthetase family. In terms of assembly, homodimer.

The protein resides in the cytoplasm. It catalyses the reaction (R)-pantoate + beta-alanine + ATP = (R)-pantothenate + AMP + diphosphate + H(+). The protein operates within cofactor biosynthesis; (R)-pantothenate biosynthesis; (R)-pantothenate from (R)-pantoate and beta-alanine: step 1/1. Functionally, catalyzes the condensation of pantoate with beta-alanine in an ATP-dependent reaction via a pantoyl-adenylate intermediate. The sequence is that of Pantothenate synthetase from Ralstonia pickettii (strain 12J).